We begin with the raw amino-acid sequence, 184 residues long: Mitochondrial import inner membrane translocase subunit Tim22 (184 aa).

2 cysteine pairs are disulfide-bonded: cysteine 59–cysteine 131 and cysteine 150–cysteine 169. Transmembrane regions (helical) follow at residues 64 to 84, 115 to 133, and 160 to 180; these read ALAC…TAGI, YAKN…ECLV, and AGLK…AVID.

Belongs to the Tim17/Tim22/Tim23 family. As to quaternary structure, core component of the TIM22 complex.

The protein resides in the mitochondrion inner membrane. Essential core component of the TIM22 complex, a complex that mediates the import and insertion of multi-pass transmembrane proteins into the mitochondrial inner membrane. In the TIM22 complex, it constitutes the voltage-activated and signal-gated channel. Forms a twin-pore translocase that uses the membrane potential as external driving force in 2 voltage-dependent steps. This is Mitochondrial import inner membrane translocase subunit Tim22 (timm22) from Xenopus laevis (African clawed frog).